Consider the following 339-residue polypeptide: Cathepsin B (339 aa).

Positions 1 to 17 (MWQLWASLCCLLVLANA) are cleaved as a signal peptide. Residues 18-79 (RSRPSFHPLS…QRVMFTEDLK (62 aa)) constitute a propeptide, activation peptide. Disulfide bonds link C93/C122, C105/C150, C141/C207, C142/C146, C179/C211, and C187/C198. Residue C108 is part of the active site. N192 carries an N-linked (GlcNAc...) asparagine glycan. Position 220 is an N6-acetyllysine (K220). Residues H278 and N298 contribute to the active site. A propeptide spanning residues 334 to 339 (QYWEKI) is cleaved from the precursor.

Belongs to the peptidase C1 family. Dimer of a heavy chain and a light chain cross-linked by a disulfide bond. Interacts with SRPX2. Directly interacts with SHKBP1. In terms of tissue distribution, expressed in the stratum spinosum of the epidermis. Weak expression is detected in the stratum granulosum.

It is found in the lysosome. The protein localises to the melanosome. Its subcellular location is the secreted. The protein resides in the extracellular space. It localises to the apical cell membrane. It carries out the reaction Hydrolysis of proteins with broad specificity for peptide bonds. Preferentially cleaves -Arg-Arg-|-Xaa bonds in small molecule substrates (thus differing from cathepsin L). In addition to being an endopeptidase, shows peptidyl-dipeptidase activity, liberating C-terminal dipeptides.. Its activity is regulated as follows. Inhibited by leupeptin. In terms of biological role, thiol protease which is believed to participate in intracellular degradation and turnover of proteins. Cleaves matrix extracellular phosphoglycoprotein MEPE. Involved in the solubilization of cross-linked TG/thyroglobulin in the thyroid follicle lumen. Has also been implicated in tumor invasion and metastasis. The sequence is that of Cathepsin B (CTSB) from Homo sapiens (Human).